The chain runs to 367 residues: Heme A synthase (367 aa).

5 consecutive transmembrane segments (helical) span residues 25–45 (ALRL…LVGG), 111–131 (LIAR…WLTG), 139–159 (WPLV…WWMV), 174–194 (LATH…IMRG), and 210–230 (GFAA…ALVA). His-274 lines the heme pocket. The next 3 helical transmembrane spans lie at 276–296 (IGAY…LRAA), 305–325 (AVVL…TLLM), and 327–347 (VPLH…GFAV). His-335 lines the heme pocket.

This sequence belongs to the COX15/CtaA family. Type 2 subfamily. As to quaternary structure, interacts with CtaB. Heme b serves as cofactor.

It localises to the cell membrane. The catalysed reaction is Fe(II)-heme o + 2 A + H2O = Fe(II)-heme a + 2 AH2. It participates in porphyrin-containing compound metabolism; heme A biosynthesis; heme A from heme O: step 1/1. In terms of biological role, catalyzes the conversion of heme O to heme A by two successive hydroxylations of the methyl group at C8. The first hydroxylation forms heme I, the second hydroxylation results in an unstable dihydroxymethyl group, which spontaneously dehydrates, resulting in the formyl group of heme A. This Rhizobium etli (strain CIAT 652) protein is Heme A synthase.